The following is a 456-amino-acid chain: Probable glycine dehydrogenase (decarboxylating) subunit 1 (456 aa).

This sequence belongs to the GcvP family. N-terminal subunit subfamily. In terms of assembly, the glycine cleavage system is composed of four proteins: P, T, L and H. In this organism, the P 'protein' is a heterodimer of two subunits.

It catalyses the reaction N(6)-[(R)-lipoyl]-L-lysyl-[glycine-cleavage complex H protein] + glycine + H(+) = N(6)-[(R)-S(8)-aminomethyldihydrolipoyl]-L-lysyl-[glycine-cleavage complex H protein] + CO2. Its function is as follows. The glycine cleavage system catalyzes the degradation of glycine. The P protein binds the alpha-amino group of glycine through its pyridoxal phosphate cofactor; CO(2) is released and the remaining methylamine moiety is then transferred to the lipoamide cofactor of the H protein. The sequence is that of Probable glycine dehydrogenase (decarboxylating) subunit 1 from Legionella pneumophila subsp. pneumophila (strain Philadelphia 1 / ATCC 33152 / DSM 7513).